Here is a 354-residue protein sequence, read N- to C-terminus: Methylthioribose-1-phosphate isomerase (354 aa).

Residues 58 to 60 (RGA), Arg101, and Gln204 each bind substrate. Catalysis depends on Asp245, which acts as the Proton donor. Residue 255–256 (NK) participates in substrate binding.

This sequence belongs to the eIF-2B alpha/beta/delta subunits family. MtnA subfamily.

It catalyses the reaction 5-(methylsulfanyl)-alpha-D-ribose 1-phosphate = 5-(methylsulfanyl)-D-ribulose 1-phosphate. It participates in amino-acid biosynthesis; L-methionine biosynthesis via salvage pathway; L-methionine from S-methyl-5-thio-alpha-D-ribose 1-phosphate: step 1/6. Functionally, catalyzes the interconversion of methylthioribose-1-phosphate (MTR-1-P) into methylthioribulose-1-phosphate (MTRu-1-P). This is Methylthioribose-1-phosphate isomerase from Xanthomonas campestris pv. campestris (strain ATCC 33913 / DSM 3586 / NCPPB 528 / LMG 568 / P 25).